Here is a 353-residue protein sequence, read N- to C-terminus: Uroporphyrinogen decarboxylase (353 aa).

Substrate contacts are provided by residues 29–33 (RQAGR), Asp79, Tyr156, Thr211, and His329.

Belongs to the uroporphyrinogen decarboxylase family. In terms of assembly, homodimer.

The protein resides in the cytoplasm. The catalysed reaction is uroporphyrinogen III + 4 H(+) = coproporphyrinogen III + 4 CO2. It functions in the pathway porphyrin-containing compound metabolism; protoporphyrin-IX biosynthesis; coproporphyrinogen-III from 5-aminolevulinate: step 4/4. Its function is as follows. Catalyzes the decarboxylation of four acetate groups of uroporphyrinogen-III to yield coproporphyrinogen-III. This is Uroporphyrinogen decarboxylase from Alcanivorax borkumensis (strain ATCC 700651 / DSM 11573 / NCIMB 13689 / SK2).